Reading from the N-terminus, the 103-residue chain is Large ribosomal subunit protein uL24 (103 aa).

The protein belongs to the universal ribosomal protein uL24 family. As to quaternary structure, part of the 50S ribosomal subunit.

Its function is as follows. One of two assembly initiator proteins, it binds directly to the 5'-end of the 23S rRNA, where it nucleates assembly of the 50S subunit. One of the proteins that surrounds the polypeptide exit tunnel on the outside of the subunit. The chain is Large ribosomal subunit protein uL24 from Dehalococcoides mccartyi (strain ATCC BAA-2100 / JCM 16839 / KCTC 5957 / BAV1).